Reading from the N-terminus, the 256-residue chain is Type III pantothenate kinase (256 aa).

6–13 lines the ATP pocket; that stretch reads DIGNTHTV. Residues Tyr-100 and 107-110 contribute to the substrate site; that span reads GADR. The Proton acceptor role is filled by Asp-109. Asp-129 provides a ligand contact to K(+). Thr-132 contributes to the ATP binding site. Thr-184 contacts substrate.

It belongs to the type III pantothenate kinase family. Homodimer. NH4(+) serves as cofactor. K(+) is required as a cofactor.

The protein localises to the cytoplasm. The catalysed reaction is (R)-pantothenate + ATP = (R)-4'-phosphopantothenate + ADP + H(+). It functions in the pathway cofactor biosynthesis; coenzyme A biosynthesis; CoA from (R)-pantothenate: step 1/5. Its function is as follows. Catalyzes the phosphorylation of pantothenate (Pan), the first step in CoA biosynthesis. This Acidothermus cellulolyticus (strain ATCC 43068 / DSM 8971 / 11B) protein is Type III pantothenate kinase.